Reading from the N-terminus, the 294-residue chain is Ferredoxin--NADP reductase (294 aa).

Residues lysine 13–leucine 137 enclose the FAD-binding FR-type domain. FAD-binding positions include arginine 72–serine 75, cysteine 93–arginine 95, tyrosine 99, valine 111–serine 113, and threonine 152. 2 residues coordinate NADP(+): serine 75 and arginine 95. NADP(+) is bound by residues threonine 152, isoleucine 184–proline 185, serine 214–arginine 215, lysine 224, lysine 224–glutamine 228, glycine 253–leucine 254, and glutamate 292.

It belongs to the ferredoxin--NADP reductase type 1 family. FAD serves as cofactor.

It is found in the cellular thylakoid membrane. It catalyses the reaction 2 reduced [2Fe-2S]-[ferredoxin] + NADP(+) + H(+) = 2 oxidized [2Fe-2S]-[ferredoxin] + NADPH. The sequence is that of Ferredoxin--NADP reductase (petH) from Spirulina sp.